Consider the following 498-residue polypeptide: Probable cytosol aminopeptidase (498 aa).

The Mn(2+) site is built by lysine 271 and aspartate 276. Lysine 283 is a catalytic residue. Mn(2+) contacts are provided by aspartate 294, aspartate 353, and glutamate 355. Residue arginine 357 is part of the active site.

It belongs to the peptidase M17 family. The cofactor is Mn(2+).

It is found in the cytoplasm. It carries out the reaction Release of an N-terminal amino acid, Xaa-|-Yaa-, in which Xaa is preferably Leu, but may be other amino acids including Pro although not Arg or Lys, and Yaa may be Pro. Amino acid amides and methyl esters are also readily hydrolyzed, but rates on arylamides are exceedingly low.. It catalyses the reaction Release of an N-terminal amino acid, preferentially leucine, but not glutamic or aspartic acids.. In terms of biological role, presumably involved in the processing and regular turnover of intracellular proteins. Catalyzes the removal of unsubstituted N-terminal amino acids from various peptides. This is Probable cytosol aminopeptidase from Bordetella petrii (strain ATCC BAA-461 / DSM 12804 / CCUG 43448).